Consider the following 961-residue polypeptide: Integrator complex subunit 7 (961 aa).

The span at 937–955 (QVRLQQQQGQPPSQQQQQR) shows a compositional bias: low complexity. Positions 937 to 961 (QVRLQQQQGQPPSQQQQQRTAYSRF) are disordered.

Belongs to the Integrator subunit 7 family. As to quaternary structure, component of the Integrator complex, composed of core subunits INTS1, INTS2, INTS3, INTS4, INTS5, INTS6, INTS7, INTS8, INTS9/RC74, INTS10, INTS11/CPSF3L, INTS12, INTS13, INTS14 and INTS15. The core complex associates with protein phosphatase 2A subunits PPP2CA and PPP2R1A, to form the Integrator-PP2A (INTAC) complex.

It localises to the nucleus. The protein localises to the chromosome. Its subcellular location is the cytoplasm. Functionally, component of the integrator complex, a multiprotein complex that terminates RNA polymerase II (Pol II) transcription in the promoter-proximal region of genes. The integrator complex provides a quality checkpoint during transcription elongation by driving premature transcription termination of transcripts that are unfavorably configured for transcriptional elongation: the complex terminates transcription by (1) catalyzing dephosphorylation of the C-terminal domain (CTD) of Pol II subunit POLR2A/RPB1 and SUPT5H/SPT5, (2) degrading the exiting nascent RNA transcript via endonuclease activity and (3) promoting the release of Pol II from bound DNA. The integrator complex is also involved in terminating the synthesis of non-coding Pol II transcripts, such as enhancer RNAs (eRNAs), small nuclear RNAs (snRNAs), telomerase RNAs and long non-coding RNAs (lncRNAs). The polypeptide is Integrator complex subunit 7 (INTS7) (Gallus gallus (Chicken)).